A 98-amino-acid chain; its full sequence is HssA/B-like protein 50 (98 aa).

Disordered stretches follow at residues 1–26 (MTLF…SFGS) and 68–98 (TRGS…CCGI). A compositionally biased stretch (gly residues) spans 84 to 98 (GHGGMGGGNGSCCGI).

Belongs to the hssA/B family.

The chain is HssA/B-like protein 50 (hssl50) from Dictyostelium discoideum (Social amoeba).